Consider the following 1039-residue polypeptide: Beta-galactosidase (1039 aa).

Positions 103 and 201 each coordinate substrate. Asp201 contacts Na(+). Residues Glu415, His417, and Glu460 each contribute to the Mg(2+) site. Substrate contacts are provided by residues Glu460 and Glu536 to His539. The Proton donor role is filled by Glu460. Glu536 (nucleophile) is an active-site residue. Asn596 contacts Mg(2+). Na(+)-binding residues include Phe600 and Asn603. Residues Asn603 and Trp1012 each contribute to the substrate site.

It belongs to the glycosyl hydrolase 2 family. Homotetramer. Mg(2+) serves as cofactor. Requires Na(+) as cofactor.

It carries out the reaction Hydrolysis of terminal non-reducing beta-D-galactose residues in beta-D-galactosides.. With respect to regulation, inhibited by zinc, copper and nickel ions. Activated by 2-mercaptoethanol and inhibited by EDTA in vitro. This is Beta-galactosidase (lacZ) from Pseudoalteromonas haloplanktis (Alteromonas haloplanktis).